Reading from the N-terminus, the 662-residue chain is UvrABC system protein B (662 aa).

In terms of domain architecture, Helicase ATP-binding spans 25-182 (KGIEKGEKFQ…KKLVEIQYER (158 aa)). 38 to 45 (GVTGSGKT) serves as a coordination point for ATP. Positions 91–114 (YYDYYQPEAYVAQSDTYIEKDASI) match the Beta-hairpin motif. The 167-residue stretch at 429–595 (QIDDLYTSIQ…TIIKDIREVI (167 aa)) folds into the Helicase C-terminal domain. The 36-residue stretch at 622–657 (DKLIEKYEEEMKEAAQNLQFEKAAHLRDVIYKLKRD) folds into the UVR domain.

This sequence belongs to the UvrB family. In terms of assembly, forms a heterotetramer with UvrA during the search for lesions. Interacts with UvrC in an incision complex.

It is found in the cytoplasm. In terms of biological role, the UvrABC repair system catalyzes the recognition and processing of DNA lesions. A damage recognition complex composed of 2 UvrA and 2 UvrB subunits scans DNA for abnormalities. Upon binding of the UvrA(2)B(2) complex to a putative damaged site, the DNA wraps around one UvrB monomer. DNA wrap is dependent on ATP binding by UvrB and probably causes local melting of the DNA helix, facilitating insertion of UvrB beta-hairpin between the DNA strands. Then UvrB probes one DNA strand for the presence of a lesion. If a lesion is found the UvrA subunits dissociate and the UvrB-DNA preincision complex is formed. This complex is subsequently bound by UvrC and the second UvrB is released. If no lesion is found, the DNA wraps around the other UvrB subunit that will check the other stand for damage. The sequence is that of UvrABC system protein B from Clostridium botulinum (strain Loch Maree / Type A3).